A 310-amino-acid polypeptide reads, in one-letter code: Malate dehydrogenase (310 aa).

Residues Gly-7 to Gly-12 and Asp-32 each bind NAD(+). Residues Arg-81 and Arg-87 each contribute to the substrate site. NAD(+) is bound by residues Asn-94 and Val-117–Asn-119. The substrate site is built by Asn-119 and Arg-150. His-174 acts as the Proton acceptor in catalysis.

Belongs to the LDH/MDH superfamily. MDH type 3 family. Homotetramer; arranged as a dimer of dimers.

The catalysed reaction is (S)-malate + NAD(+) = oxaloacetate + NADH + H(+). Catalyzes the reversible oxidation of malate to oxaloacetate. The chain is Malate dehydrogenase from Chlorobaculum parvum (strain DSM 263 / NCIMB 8327) (Chlorobium vibrioforme subsp. thiosulfatophilum).